Consider the following 93-residue polypeptide: MARVTVEDCLDHVDNRFELVLVASKRARQLARQGIEPTVEWDNDKPTVVSLREIAEGHVTKDILKQRDQDYQTSSLDLALSANSLNLEGFSFQ.

Belongs to the RNA polymerase subunit omega family. As to quaternary structure, the RNAP catalytic core consists of 2 alpha, 1 beta, 1 beta' and 1 omega subunit. When a sigma factor is associated with the core the holoenzyme is formed, which can initiate transcription.

The enzyme catalyses RNA(n) + a ribonucleoside 5'-triphosphate = RNA(n+1) + diphosphate. Functionally, promotes RNA polymerase assembly. Latches the N- and C-terminal regions of the beta' subunit thereby facilitating its interaction with the beta and alpha subunits. The polypeptide is DNA-directed RNA polymerase subunit omega (Acinetobacter baylyi (strain ATCC 33305 / BD413 / ADP1)).